The following is a 177-amino-acid chain: ATP-dependent protease subunit HslV (177 aa).

T6 is an active-site residue. Residues A162, C165, and T168 each contribute to the Na(+) site.

This sequence belongs to the peptidase T1B family. HslV subfamily. As to quaternary structure, a double ring-shaped homohexamer of HslV is capped on each side by a ring-shaped HslU homohexamer. The assembly of the HslU/HslV complex is dependent on binding of ATP.

Its subcellular location is the cytoplasm. The catalysed reaction is ATP-dependent cleavage of peptide bonds with broad specificity.. With respect to regulation, allosterically activated by HslU binding. In terms of biological role, protease subunit of a proteasome-like degradation complex believed to be a general protein degrading machinery. The protein is ATP-dependent protease subunit HslV of Lawsonia intracellularis (strain PHE/MN1-00).